The following is a 228-amino-acid chain: Octanoyltransferase (228 aa).

Residues 40-225 (GEEAERVWLV…SFERVFDAAP (186 aa)) form the BPL/LPL catalytic domain. Substrate-binding positions include 79-86 (RGGQWTYH), 156-158 (AIG), and 169-171 (GIA). Cys-187 serves as the catalytic Acyl-thioester intermediate.

This sequence belongs to the LipB family.

Its subcellular location is the cytoplasm. It carries out the reaction octanoyl-[ACP] + L-lysyl-[protein] = N(6)-octanoyl-L-lysyl-[protein] + holo-[ACP] + H(+). Its pathway is protein modification; protein lipoylation via endogenous pathway; protein N(6)-(lipoyl)lysine from octanoyl-[acyl-carrier-protein]: step 1/2. Catalyzes the transfer of endogenously produced octanoic acid from octanoyl-acyl-carrier-protein onto the lipoyl domains of lipoate-dependent enzymes. Lipoyl-ACP can also act as a substrate although octanoyl-ACP is likely to be the physiological substrate. This is Octanoyltransferase from Acidiphilium cryptum (strain JF-5).